Consider the following 847-residue polypeptide: Cancer-associated gene 1 protein homolog (847 aa).

The tract at residues 118–161 (EEKPELQSQVYNDPADASQKPDPLKEESLMESSTSENKDELVHE) is disordered. Residues 377–567 (NVILEKNDIN…AAKREAQACT (191 aa)) are a coiled coil.

This is Cancer-associated gene 1 protein homolog (Cage1) from Rattus norvegicus (Rat).